The following is a 462-amino-acid chain: Cysteine--tRNA ligase (462 aa).

Cys29 contributes to the Zn(2+) binding site. The 'HIGH' region motif lies at 31-41 (PTVYNHAHIGN). Residues Cys211, His236, and Glu240 each contribute to the Zn(2+) site. The short motif at 269–273 (KMSKS) is the 'KMSKS' region element. Residue Lys272 participates in ATP binding.

Belongs to the class-I aminoacyl-tRNA synthetase family. As to quaternary structure, monomer. It depends on Zn(2+) as a cofactor.

It is found in the cytoplasm. It catalyses the reaction tRNA(Cys) + L-cysteine + ATP = L-cysteinyl-tRNA(Cys) + AMP + diphosphate. This Caulobacter sp. (strain K31) protein is Cysteine--tRNA ligase.